We begin with the raw amino-acid sequence, 359 residues long: 3-dehydroquinate synthase (359 aa).

Residues 70–75, 104–108, 128–129, Lys-141, and Lys-150 contribute to the NAD(+) site; these read DAEGGK, GAATD, and TT. Zn(2+) contacts are provided by Glu-183, His-246, and His-262.

The protein belongs to the sugar phosphate cyclases superfamily. Dehydroquinate synthase family. Requires Co(2+) as cofactor. Zn(2+) serves as cofactor. The cofactor is NAD(+).

It localises to the cytoplasm. It catalyses the reaction 7-phospho-2-dehydro-3-deoxy-D-arabino-heptonate = 3-dehydroquinate + phosphate. It participates in metabolic intermediate biosynthesis; chorismate biosynthesis; chorismate from D-erythrose 4-phosphate and phosphoenolpyruvate: step 2/7. Functionally, catalyzes the conversion of 3-deoxy-D-arabino-heptulosonate 7-phosphate (DAHP) to dehydroquinate (DHQ). This Mycolicibacterium gilvum (strain PYR-GCK) (Mycobacterium gilvum (strain PYR-GCK)) protein is 3-dehydroquinate synthase.